A 238-amino-acid polypeptide reads, in one-letter code: Probable transcriptional regulatory protein MGAS2096_Spy0287 (238 aa).

This sequence belongs to the TACO1 family. YeeN subfamily.

It localises to the cytoplasm. The polypeptide is Probable transcriptional regulatory protein MGAS2096_Spy0287 (Streptococcus pyogenes serotype M12 (strain MGAS2096)).